The sequence spans 543 residues: UPF0324 membrane protein RB9488 (543 aa).

Positions Met1 to Asp22 are enriched in low complexity. Residues Met1–Leu41 form a disordered region. The chain crosses the membrane as a helical span at residues Trp51–Pro73. The interval Val91–Ala120 is disordered. Helical transmembrane passes span Ile160 to Asn182, Ala189 to Gly211, Glu221 to Leu243, Leu270 to Tyr292, Asn307 to Cys329, Leu336 to Ile358, Gly368 to Gly390, Ile403 to Phe422, Ile437 to Tyr459, Thr479 to Thr496, and Leu511 to Phe533.

It belongs to the UPF0324 family.

Its subcellular location is the cell membrane. This is UPF0324 membrane protein RB9488 from Rhodopirellula baltica (strain DSM 10527 / NCIMB 13988 / SH1).